The sequence spans 254 residues: Mannose-binding protein (254 aa).

An N-terminal signal peptide occupies residues 1 to 19 (MTLLQPFSALLLCLSLMMA). The interval 46–99 (NGLPGRDGRDGPKGEKGDPGEGLRGLQGLPGKAGPQGLKGEVGPQGEKGQKGER) is disordered. Residues 51–66 (RDGRDGPKGEKGDPGE) are compositionally biased toward basic and acidic residues. Residue Pro57 is modified to 4-hydroxyproline. 5-hydroxylysine is present on residues Lys58 and Lys61. O-linked (Gal...) hydroxylysine glycans are attached at residues Lys58 and Lys61. Position 75 is a 4-hydroxyproline (Pro75). 5-hydroxylysine occurs at positions 93 and 96. In terms of domain architecture, C-type lectin spans 140-250 (VGKKMFVSTG…LDCSNSNIFI (111 aa)). 2 cysteine pairs are disulfide-bonded: Cys161-Cys252 and Cys229-Cys243.

Oligomeric complex of 3 or more homotrimers.

The protein resides in the secreted. Its function is as follows. Calcium-dependent lectin involved in innate immune defense. Binds mannose, fucose and N-acetylglucosamine on different microorganisms and activates the lectin complement pathway. In Gallus gallus (Chicken), this protein is Mannose-binding protein.